The sequence spans 981 residues: Lateral signaling target protein 2 homolog (981 aa).

The tract at residues 308–462 is disordered; the sequence is PLGSSSIEAP…LESSDDDTDE (155 aa). Low complexity-rich tracts occupy residues 326-356, 369-380, 390-404, and 412-433; these read TTSS…TTNT, NNHNSNSNSSTN, SPSM…TPTA, and PSHS…PADW. The span at 434-462 shows a compositional bias: acidic residues; the sequence is SDGDDEDEDDDDIEVDEEDLESSDDDTDE. Phosphoserine is present on residues S544 and S545. 2 disordered regions span residues 561 to 642 and 749 to 897; these read EQMQ…SSLS and DNVF…SPPA. Basic residues predominate over residues 576–611; that stretch reads HSHRHHQRHHHHHHHRHSHQHRQPHPHRTTRSGRKR. A compositionally biased stretch (low complexity) spans 630 to 642; sequence LASGDTSAASSLS. Positions 760 to 791 are enriched in polar residues; the sequence is ATGQRHSAGASMQRNNTIDLASQSGEGSPSGA. Position 805 is a phosphoserine (S805). 2 stretches are compositionally biased toward low complexity: residues 811–866 and 883–896; these read AASS…PVSA and PSSA…LSPP. The FYVE-type zinc-finger motif lies at 901-961; it reads DGKAPRCMAC…VCRDCYVREV (61 aa). Zn(2+) contacts are provided by C907, C910, C923, C926, C931, C934, C953, and C956.

It belongs to the lst-2 family.

Its function is as follows. Negative regulator of epidermal growth factor receptor (EGFR) signaling. This Drosophila erecta (Fruit fly) protein is Lateral signaling target protein 2 homolog.